Here is a 293-residue protein sequence, read N- to C-terminus: 4-hydroxy-tetrahydrodipicolinate synthase (293 aa).

Thr51 is a binding site for pyruvate. Tyr140 functions as the Proton donor/acceptor in the catalytic mechanism. Lys168 serves as the catalytic Schiff-base intermediate with substrate. Residue Ile209 participates in pyruvate binding.

The protein belongs to the DapA family. Homotetramer; dimer of dimers.

Its subcellular location is the cytoplasm. The catalysed reaction is L-aspartate 4-semialdehyde + pyruvate = (2S,4S)-4-hydroxy-2,3,4,5-tetrahydrodipicolinate + H2O + H(+). The protein operates within amino-acid biosynthesis; L-lysine biosynthesis via DAP pathway; (S)-tetrahydrodipicolinate from L-aspartate: step 3/4. Functionally, catalyzes the condensation of (S)-aspartate-beta-semialdehyde [(S)-ASA] and pyruvate to 4-hydroxy-tetrahydrodipicolinate (HTPA). The sequence is that of 4-hydroxy-tetrahydrodipicolinate synthase from Streptococcus mutans serotype c (strain ATCC 700610 / UA159).